Reading from the N-terminus, the 418-residue chain is S-adenosylmethionine synthase (418 aa).

Residue histidine 16 participates in ATP binding. Aspartate 18 serves as a coordination point for Mg(2+). Position 44 (glutamate 44) interacts with K(+). L-methionine is bound by residues glutamate 57 and glutamine 100. Residues 100-110 (QSPDISQGVTK) are flexible loop. Residues 175–177 (DGK), 251–252 (KF), aspartate 260, 266–267 (RK), alanine 283, and lysine 287 each bind ATP. Aspartate 260 serves as a coordination point for L-methionine. Lysine 291 serves as a coordination point for L-methionine.

It belongs to the AdoMet synthase family. In terms of assembly, homotetramer; dimer of dimers. It depends on Mg(2+) as a cofactor. The cofactor is K(+).

The protein localises to the cytoplasm. It catalyses the reaction L-methionine + ATP + H2O = S-adenosyl-L-methionine + phosphate + diphosphate. Its pathway is amino-acid biosynthesis; S-adenosyl-L-methionine biosynthesis; S-adenosyl-L-methionine from L-methionine: step 1/1. Its function is as follows. Catalyzes the formation of S-adenosylmethionine (AdoMet) from methionine and ATP. The overall synthetic reaction is composed of two sequential steps, AdoMet formation and the subsequent tripolyphosphate hydrolysis which occurs prior to release of AdoMet from the enzyme. The protein is S-adenosylmethionine synthase of Gloeothece citriformis (strain PCC 7424) (Cyanothece sp. (strain PCC 7424)).